A 420-amino-acid polypeptide reads, in one-letter code: Shaggy-related protein kinase delta (420 aa).

The tract at residues 1–61 (MESHLGNGVG…DIIDGVGAEP (61 aa)) is disordered. The span at 10–26 (GSSRSAKNTKNTSSSVD) shows a compositional bias: polar residues. Basic and acidic residues predominate over residues 28–41 (LSRDMLEMKIRDKT). Acidic residues predominate over residues 42 to 53 (EADEERDSEPDI). The Protein kinase domain maps to 82–366 (YIAEHVVGTG…AVEACIHPFF (285 aa)). Residues 88–96 (VGTGSFGMV) and Lys111 each bind ATP. Asp207 acts as the Proton acceptor in catalysis. A Phosphotyrosine modification is found at Tyr242.

This sequence belongs to the protein kinase superfamily. CMGC Ser/Thr protein kinase family. GSK-3 subfamily. Post-translationally, autophosphorylated mainly on threonine and serine residues.

The enzyme catalyses L-seryl-[protein] + ATP = O-phospho-L-seryl-[protein] + ADP + H(+). The catalysed reaction is L-threonyl-[protein] + ATP = O-phospho-L-threonyl-[protein] + ADP + H(+). In terms of biological role, may mediate extracellular signals to regulate transcription in differentiating cells. This Arabidopsis thaliana (Mouse-ear cress) protein is Shaggy-related protein kinase delta (ASK4).